Consider the following 440-residue polypeptide: Enolase (440 aa).

Residue Q163 participates in (2R)-2-phosphoglycerate binding. Catalysis depends on E205, which acts as the Proton donor. Positions 242, 288, and 315 each coordinate Mg(2+). K340, R369, S370, and K391 together coordinate (2R)-2-phosphoglycerate. K340 functions as the Proton acceptor in the catalytic mechanism.

Belongs to the enolase family. Requires Mg(2+) as cofactor.

The protein localises to the cytoplasm. Its subcellular location is the secreted. The protein resides in the cell surface. It catalyses the reaction (2R)-2-phosphoglycerate = phosphoenolpyruvate + H2O. It functions in the pathway carbohydrate degradation; glycolysis; pyruvate from D-glyceraldehyde 3-phosphate: step 4/5. Its function is as follows. Catalyzes the reversible conversion of 2-phosphoglycerate (2-PG) into phosphoenolpyruvate (PEP). It is essential for the degradation of carbohydrates via glycolysis. The polypeptide is Enolase (Pediococcus pentosaceus (strain ATCC 25745 / CCUG 21536 / LMG 10740 / 183-1w)).